We begin with the raw amino-acid sequence, 217 residues long: Small ribosomal subunit protein uS3 (217 aa).

Residues 40 to 110 enclose the KH type-2 domain; that stretch reads IRDLINKWFN…EVYINIHEVR (71 aa).

The protein belongs to the universal ribosomal protein uS3 family. In terms of assembly, part of the 30S ribosomal subunit. Forms a tight complex with proteins S10 and S14.

Binds the lower part of the 30S subunit head. Binds mRNA in the 70S ribosome, positioning it for translation. The sequence is that of Small ribosomal subunit protein uS3 from Rickettsia typhi (strain ATCC VR-144 / Wilmington).